A 310-amino-acid polypeptide reads, in one-letter code: Aspartate carbamoyltransferase catalytic subunit (310 aa).

Arg58 and Thr59 together coordinate carbamoyl phosphate. Lys86 is an L-aspartate binding site. Positions 108, 137, and 140 each coordinate carbamoyl phosphate. L-aspartate contacts are provided by Arg170 and Arg225. 2 residues coordinate carbamoyl phosphate: Gly264 and Pro265.

The protein belongs to the aspartate/ornithine carbamoyltransferase superfamily. ATCase family. As to quaternary structure, heterododecamer (2C3:3R2) of six catalytic PyrB chains organized as two trimers (C3), and six regulatory PyrI chains organized as three dimers (R2).

The catalysed reaction is carbamoyl phosphate + L-aspartate = N-carbamoyl-L-aspartate + phosphate + H(+). It participates in pyrimidine metabolism; UMP biosynthesis via de novo pathway; (S)-dihydroorotate from bicarbonate: step 2/3. Its function is as follows. Catalyzes the condensation of carbamoyl phosphate and aspartate to form carbamoyl aspartate and inorganic phosphate, the committed step in the de novo pyrimidine nucleotide biosynthesis pathway. The polypeptide is Aspartate carbamoyltransferase catalytic subunit (Coxiella burnetii (strain CbuG_Q212) (Coxiella burnetii (strain Q212))).